The following is a 222-amino-acid chain: Interleukin-12 subunit alpha (222 aa).

Residues 1 to 25 form the signal peptide; it reads MCPPRGLLLVTILVLLSHLDHLTWA. 3 disulfide bridges follow: C40-C113, C67-C199, and C88-C126. N-linked (GlcNAc...) asparagine glycans are attached at residues N42, N96, and N110.

Belongs to the IL-6 superfamily. As to quaternary structure, heterodimer with IL12B; disulfide-linked. This heterodimer is known as interleukin IL-12. Heterodimer with EBI3/IL27B; not disulfide-linked. This heterodimer is known as interleukin IL-35. Interacts with NBR1; this interaction promotes IL-12 secretion.

It is found in the secreted. Its function is as follows. Heterodimerizes with IL12B to form the IL-12 cytokine or with EBI3/IL27B to form the IL-35 cytokine. IL-12 is primarily produced by professional antigen-presenting cells (APCs) such as B-cells and dendritic cells (DCs) as well as macrophages and granulocytes and regulates T-cell and natural killer-cell responses, induces the production of interferon-gamma (IFN-gamma), favors the differentiation of T-helper 1 (Th1) cells and is an important link between innate resistance and adaptive immunity. Mechanistically, exerts its biological effects through a receptor composed of IL12R1 and IL12R2 subunits. Binding to the receptor results in the rapid tyrosine phosphorylation of a number of cellular substrates including the JAK family kinases TYK2 and JAK2. In turn, recruited STAT4 gets phosphorylated and translocates to the nucleus where it regulates cytokine/growth factor responsive genes. As part of IL-35, plays essential roles in maintaining the immune homeostasis of the liver microenvironment and also functions as an immune-suppressive cytokine. Mediates biological events through unconventional receptors composed of IL12RB2 and gp130/IL6ST heterodimers or homodimers. Signaling requires the transcription factors STAT1 and STAT4, which form a unique heterodimer that binds to distinct DNA sites. The chain is Interleukin-12 subunit alpha (IL12A) from Canis lupus familiaris (Dog).